We begin with the raw amino-acid sequence, 539 residues long: Acid-sensing ion channel 4 (539 aa).

At 1 to 68 (MPIEIVCKIK…GPGPHGLRRT (68 aa)) the chain is on the cytoplasmic side. The helical transmembrane segment at 69–89 (LWALALLTSLAAFLYQAAGLA) threads the bilayer. At 90–438 (RGYLTRPHLV…EQRAAYGLSA (349 aa)) the chain is on the extracellular side. Intrachain disulfides connect Cys-118-Cys-202 and Cys-180-Cys-187. Residues Asn-191 and Asn-243 are each glycosylated (N-linked (GlcNAc...) asparagine). Cystine bridges form between Cys-296-Cys-375, Cys-318-Cys-371, Cys-322-Cys-369, Cys-331-Cys-353, and Cys-333-Cys-345. N-linked (GlcNAc...) asparagine glycosylation occurs at Asn-376. A helical membrane pass occupies residues 439-459 (LLGDLGGQMGLFIGASILTLL). Residues 452–454 (GAS) carry the GAS motif; ion selectivity filter motif. Residues 460-539 (EILDYIYEVS…PGGLFEDFAC (80 aa)) lie on the Cytoplasmic side of the membrane. A disordered region spans residues 501–531 (EQSPCPSRGRVEGGGVSSLLPNHHHPHGPPG).

It belongs to the amiloride-sensitive sodium channel (TC 1.A.6) family. ASIC4 subfamily. In terms of assembly, homotrimer. Heterotrimer; with other ASIC proteins producing functional channels. Expressed in pituitary gland. Weakly expressed in brain, vestibular system and organ of Corti.

It localises to the cell membrane. Does not exhibit measurable stand-alone pH-gated sodium channel activity but may form pH-gated heterotrimeric sodium channels. Its activity could also depend on alternative gating mechanisms. This is Acid-sensing ion channel 4 from Homo sapiens (Human).